Reading from the N-terminus, the 1006-residue chain is 5'-3' exoribonuclease 2 (1006 aa).

Coiled-coil stretches lie at residues 256-287 (FAQD…NSEQ) and 453-544 (RLKK…AESE). The interval 492 to 529 (DDAVSKANKTNFNLAEVMKQKIINKKHRLEKDNEEEEI) is required for retention in the nucleus. Residues 561–575 (DRENSETTEVSRDSP) show a composition bias toward basic and acidic residues. 2 disordered regions span residues 561–584 (DREN…NVSE) and 939–1006 (HNYG…ANRR). S574 carries the post-translational modification Phosphoserine. Residues 939-956 (HNYGRNSYNSQPGFNNSR) show a composition bias toward polar residues. 6 repeat units span residues 955 to 958 (SRYD), 961 to 964 (NNNY), 972 to 974 (NNN), 975 to 978 (YSGN), 984 to 986 (YSG), and 996 to 999 (SRYD). Positions 955–999 (SRYDGGNNNYRQNSNYRNNNYSGNRNSGQYSGNSYSRNNKQSRYD) are 2 X 4 AA repeats of S-R-Y-D, N-N-N-Y, Y-S-G-N. The span at 959-993 (GGNNNYRQNSNYRNNNYSGNRNSGQYSGNSYSRNN) shows a compositional bias: low complexity. The span at 996-1006 (SRYDNSRANRR) shows a compositional bias: basic and acidic residues.

The protein belongs to the 5'-3' exonuclease family. XRN2/RAT1 subfamily. Interacts with RAI1 and RTT103. Mg(2+) serves as cofactor. Mn(2+) is required as a cofactor.

Its subcellular location is the nucleus. Inhibited by nucleoside 3', 5'-bisphosphates. In terms of biological role, possesses 5'-&gt;3' exoribonuclease activity. Required for the processing of nuclear mRNA, rRNA and small nucleolar RNA (snoRNA) precursors. May promote termination of transcription by RNA polymerase II via the recruitment of 3'-end processing factors to the poly(A) site and by the degradation of nascent RNA downstream of the poly(A) site. This Saccharomyces cerevisiae (strain ATCC 204508 / S288c) (Baker's yeast) protein is 5'-3' exoribonuclease 2 (RAT1).